Consider the following 661-residue polypeptide: Vasorin (661 aa).

The N-terminal stretch at 1–19 (MWHLLVWIILLATAQQMIT) is a signal peptide. The LRRNT domain maps to 20–50 (EGCPAGCQCNTPQTVFCLARKNSNFPRSVPP). Residues 20–563 (EGCPAGCQCN…VTQSQEGNLT (544 aa)) lie on the Extracellular side of the membrane. LRR repeat units lie at residues 52-72 (TLNL…SFIG), 75-96 (GLHL…VFRN), 99-120 (NLSN…TFQG), 123-144 (RLER…AFKG), 147-168 (SLLE…SLPH), 169-189 (LLLL…VFNA), 191-212 (NIES…LLSG), 215-237 (NLHE…HGLT), 238-258 (KLNI…LSNL), and 259-281 (PALQ…LFRS). Asn99 carries N-linked (GlcNAc...) asparagine glycosylation. In terms of domain architecture, LRRCT spans 293-346 (NPFNCVCSLGWLSEWMRVSGVVLLRPDETRCHFPPKNAGKTLRQLRDSEYGCPA). Over residues 348 to 385 (TTIQMPSTMPPSTTTGPPTTTKHLQTEAPTTASTTTTT) the composition is skewed to low complexity. The segment at 348 to 395 (TTIQMPSTMPPSTTTGPPTTTKHLQTEAPTTASTTTTTIPHQEQEEDT) is disordered. The region spanning 403–440 (EDTLCPPQTCLNGGSCHLDPTGQLECECPPGFQGTYCE) is the EGF-like domain. Intrachain disulfides connect Cys407–Cys418, Cys412–Cys428, and Cys430–Cys439. The region spanning 455–543 (EQVKIIEVTV…EEDLCTETHT (89 aa)) is the Fibronectin type-III domain. Asn518 and Asn561 each carry an N-linked (GlcNAc...) asparagine glycan. The chain crosses the membrane as a helical span at residues 564 to 584 (LVLVPAVAAGILLSAAVAAAA). Over 585–661 (CYARRRKGKG…PTGRLPHSYF (77 aa)) the chain is Cytoplasmic. A disordered region spans residues 591-661 (KGKGHSVEDG…PTGRLPHSYF (71 aa)). The segment covering 606 to 623 (DGVKKGLDGKGEVKKLSE) has biased composition (basic and acidic residues).

The protein localises to the membrane. Functionally, may act as an inhibitor of TGF-beta signaling. The chain is Vasorin (vasn) from Xenopus tropicalis (Western clawed frog).